Consider the following 265-residue polypeptide: MSDILNTILARKADEVAERSARVPLAELIARSADLPLTRGFAAAMQASIAAGDPAVIAEVKKASPSKGVIRPDFQPADIAVSYEFGGATCLSVLTDVDFFQGSDAYLRQARDACTLPVLRKDFTVDPYQVYEARVLGADCILLIVSALEDAQLADLSGLAMQLGLDVLVEVHDIDELERAVQVPVPLIGINNRNLRTFEVTLQTTLDMRAAVPRDRVLVTESGIVTQADVQLMRSHDVNAFLVGETFMRAAEPGESLRQLFFAHD.

This sequence belongs to the TrpC family.

The enzyme catalyses 1-(2-carboxyphenylamino)-1-deoxy-D-ribulose 5-phosphate + H(+) = (1S,2R)-1-C-(indol-3-yl)glycerol 3-phosphate + CO2 + H2O. Its pathway is amino-acid biosynthesis; L-tryptophan biosynthesis; L-tryptophan from chorismate: step 4/5. This is Indole-3-glycerol phosphate synthase from Xanthomonas euvesicatoria pv. vesicatoria (strain 85-10) (Xanthomonas campestris pv. vesicatoria).